A 748-amino-acid chain; its full sequence is Polyribonucleotide nucleotidyltransferase (748 aa).

Mg(2+)-binding residues include Asp-522 and Asp-528. The 60-residue stretch at 588–647 (PRVTTIRVPVDKIGEVIGPKGKIINAITEETGAQISIEDDGTVFVGATDGPSAQAAIDRI) folds into the KH domain. Residues 659–728 (GERFLGTVVK…KRGKISLVLV (70 aa)) enclose the S1 motif domain.

It belongs to the polyribonucleotide nucleotidyltransferase family. It depends on Mg(2+) as a cofactor.

Its subcellular location is the cytoplasm. The enzyme catalyses RNA(n+1) + phosphate = RNA(n) + a ribonucleoside 5'-diphosphate. Its function is as follows. Involved in mRNA degradation. Catalyzes the phosphorolysis of single-stranded polyribonucleotides processively in the 3'- to 5'-direction. The sequence is that of Polyribonucleotide nucleotidyltransferase from Mycobacterium avium (strain 104).